The chain runs to 102 residues: Large ribosomal subunit protein bL21 (102 aa).

This sequence belongs to the bacterial ribosomal protein bL21 family. In terms of assembly, part of the 50S ribosomal subunit. Contacts protein L20.

Its function is as follows. This protein binds to 23S rRNA in the presence of protein L20. The polypeptide is Large ribosomal subunit protein bL21 (Bacillus pumilus (strain SAFR-032)).